Here is a 360-residue protein sequence, read N- to C-terminus: UDP-N-acetylglucosamine--N-acetylmuramyl-(pentapeptide) pyrophosphoryl-undecaprenol N-acetylglucosamine transferase (360 aa).

Residues 13–15 (TGG), R164, S192, and Q293 contribute to the UDP-N-acetyl-alpha-D-glucosamine site.

The protein belongs to the glycosyltransferase 28 family. MurG subfamily.

Its subcellular location is the cell inner membrane. It catalyses the reaction di-trans,octa-cis-undecaprenyl diphospho-N-acetyl-alpha-D-muramoyl-L-alanyl-D-glutamyl-meso-2,6-diaminopimeloyl-D-alanyl-D-alanine + UDP-N-acetyl-alpha-D-glucosamine = di-trans,octa-cis-undecaprenyl diphospho-[N-acetyl-alpha-D-glucosaminyl-(1-&gt;4)]-N-acetyl-alpha-D-muramoyl-L-alanyl-D-glutamyl-meso-2,6-diaminopimeloyl-D-alanyl-D-alanine + UDP + H(+). It functions in the pathway cell wall biogenesis; peptidoglycan biosynthesis. Its function is as follows. Cell wall formation. Catalyzes the transfer of a GlcNAc subunit on undecaprenyl-pyrophosphoryl-MurNAc-pentapeptide (lipid intermediate I) to form undecaprenyl-pyrophosphoryl-MurNAc-(pentapeptide)GlcNAc (lipid intermediate II). In Chromobacterium violaceum (strain ATCC 12472 / DSM 30191 / JCM 1249 / CCUG 213 / NBRC 12614 / NCIMB 9131 / NCTC 9757 / MK), this protein is UDP-N-acetylglucosamine--N-acetylmuramyl-(pentapeptide) pyrophosphoryl-undecaprenol N-acetylglucosamine transferase.